Reading from the N-terminus, the 134-residue chain is Small ribosomal subunit protein uS12 (134 aa).

Position 89 is a 3-methylthioaspartic acid (aspartate 89). The segment at 101–134 (TLDASGVNGRNQSRSKYGTKRPKPGQAAAGGKKK) is disordered. A compositionally biased stretch (low complexity) spans 125-134 (GQAAAGGKKK).

It belongs to the universal ribosomal protein uS12 family. In terms of assembly, part of the 30S ribosomal subunit. Contacts proteins S8 and S17. May interact with IF1 in the 30S initiation complex.

With S4 and S5 plays an important role in translational accuracy. In terms of biological role, interacts with and stabilizes bases of the 16S rRNA that are involved in tRNA selection in the A site and with the mRNA backbone. Located at the interface of the 30S and 50S subunits, it traverses the body of the 30S subunit contacting proteins on the other side and probably holding the rRNA structure together. The combined cluster of proteins S8, S12 and S17 appears to hold together the shoulder and platform of the 30S subunit. The polypeptide is Small ribosomal subunit protein uS12 (Gemmatimonas aurantiaca (strain DSM 14586 / JCM 11422 / NBRC 100505 / T-27)).